The chain runs to 440 residues: Chromosome partition protein MukF (440 aa).

The segment at leucine 208 to isoleucine 236 is leucine-zipper.

This sequence belongs to the MukF family. As to quaternary structure, interacts, and probably forms a ternary complex, with MukE and MukB via its C-terminal region. The complex formation is stimulated by calcium or magnesium. It is required for an interaction between MukE and MukB.

The protein resides in the cytoplasm. Its subcellular location is the nucleoid. Involved in chromosome condensation, segregation and cell cycle progression. May participate in facilitating chromosome segregation by condensation DNA from both sides of a centrally located replisome during cell division. Not required for mini-F plasmid partitioning. Probably acts via its interaction with MukB and MukE. Overexpression results in anucleate cells. It has a calcium binding activity. This Histophilus somni (strain 129Pt) (Haemophilus somnus) protein is Chromosome partition protein MukF.